A 329-amino-acid chain; its full sequence is Large ribosomal subunit protein uL3 (329 aa).

Belongs to the universal ribosomal protein uL3 family. In terms of assembly, part of the 50S ribosomal subunit. Forms a cluster with proteins L14 and L24e.

Functionally, one of the primary rRNA binding proteins, it binds directly near the 3'-end of the 23S rRNA, where it nucleates assembly of the 50S subunit. The chain is Large ribosomal subunit protein uL3 from Picrophilus torridus (strain ATCC 700027 / DSM 9790 / JCM 10055 / NBRC 100828 / KAW 2/3).